A 517-amino-acid chain; its full sequence is Crotonobetaine/carnitine--CoA ligase (517 aa).

Belongs to the ATP-dependent AMP-binding enzyme family.

The catalysed reaction is 4-(trimethylamino)butanoate + ATP + CoA = 4-(trimethylamino)butanoyl-CoA + AMP + diphosphate. It catalyses the reaction crotonobetaine + ATP + CoA = crotonobetainyl-CoA + AMP + diphosphate. It carries out the reaction (R)-carnitine + ATP + CoA = (R)-carnitinyl-CoA + AMP + diphosphate. It functions in the pathway amine and polyamine metabolism; carnitine metabolism. Functionally, catalyzes the transfer of CoA to carnitine, generating the initial carnitinyl-CoA needed for the CaiB reaction cycle. Also has activity toward crotonobetaine and gamma-butyrobetaine. The chain is Crotonobetaine/carnitine--CoA ligase from Shigella flexneri.